Reading from the N-terminus, the 324-residue chain is 2,3,4,5-tetrahydropyridine-2,6-dicarboxylate N-succinyltransferase (324 aa).

Residues aspartate 173 and glutamate 190 each coordinate Mg(2+). Glutamate 206 acts as the Acyl-anhydride intermediate in catalysis. Succinyl-CoA-binding positions include arginine 208, glycine 223, serine 226, alanine 249, 264-265 (EA), glycine 272, lysine 284, and 297-300 (RRNS).

Belongs to the type 2 tetrahydrodipicolinate N-succinyltransferase family. As to quaternary structure, homotrimer.

The protein localises to the cytoplasm. It catalyses the reaction (S)-2,3,4,5-tetrahydrodipicolinate + succinyl-CoA + H2O = (S)-2-succinylamino-6-oxoheptanedioate + CoA. It participates in amino-acid biosynthesis; L-lysine biosynthesis via DAP pathway; LL-2,6-diaminopimelate from (S)-tetrahydrodipicolinate (succinylase route): step 1/3. Catalyzes the conversion of the cyclic tetrahydrodipicolinate (THDP) into the acyclic N-succinyl-L-2-amino-6-oxopimelate using succinyl-CoA. The sequence is that of 2,3,4,5-tetrahydropyridine-2,6-dicarboxylate N-succinyltransferase from Geodermatophilus obscurus (strain ATCC 25078 / DSM 43160 / JCM 3152 / CCUG 61914 / KCC A-0152 / KCTC 9177 / NBRC 13315 / NRRL B-3577 / G-20).